The sequence spans 367 residues: Peptide chain release factor 2 (367 aa).

Gln254 carries the N5-methylglutamine modification.

This sequence belongs to the prokaryotic/mitochondrial release factor family. In terms of processing, methylated by PrmC. Methylation increases the termination efficiency of RF2.

It is found in the cytoplasm. Functionally, peptide chain release factor 2 directs the termination of translation in response to the peptide chain termination codons UGA and UAA. In Burkholderia cenocepacia (strain ATCC BAA-245 / DSM 16553 / LMG 16656 / NCTC 13227 / J2315 / CF5610) (Burkholderia cepacia (strain J2315)), this protein is Peptide chain release factor 2.